Consider the following 409-residue polypeptide: Aquaporin-10 (409 aa).

Disordered regions lie at residues 1-24 (MADAPTYIRQSTTGTATTAPTTMP) and 47-74 (ADVNDDNHDNYDETTGLRSGEKKTRPLV). Residues 12-22 (TTGTATTAPTT) show a composition bias toward low complexity. Transmembrane regions (helical) follow at residues 110-130 (FLGSFILIVFGNGVVAQVVLS) and 138-158 (LSINIGYGLAVAFGVYIAGGI). An NPA 1 motif is present at residues 164–166 (NPA). Residues 184 to 204 (VYMFAQYAGCICASAIVHAIY) form a helical membrane-spanning segment. An N-linked (GlcNAc...) asparagine glycan is attached at asparagine 215. The next 2 helical transmembrane spans lie at 241–261 (TGLADQIFATSFLMIGILALT) and 270–290 (GGVVPILVGCLVMAIGLAYGF). The NPA 2 signature appears at 297–299 (NPA). Residues 339–359 (IPVVGPHLGALLGAAIYFFFI) traverse the membrane as a helical segment.

The protein belongs to the MIP/aquaporin (TC 1.A.8) family.

It localises to the cell membrane. Its function is as follows. Aquaglyceroporin that may modulate the water content and osmolytes during anhydrobiosis. The protein is Aquaporin-10 of Milnesium tardigradum (Water bear).